The following is a 2602-amino-acid chain: Non-reducing polyketide synthase SAT8 (2602 aa).

C130 acts as the Nucleophile; for transacylase activity in catalysis. The active-site Proton donor/acceptor; for transacylase activity is the H249. A disordered region spans residues 379 to 398 (MLENSTSPPSPAATSSNSHC). The span at 382 to 396 (NSTSPPSPAATSSNS) shows a compositional bias: low complexity. Residues 404 to 822 (PRDIAIVGMS…GSNAAMVVTQ (419 aa)) form the Ketosynthase family 3 (KS3) domain. Catalysis depends on for beta-ketoacyl synthase activity residues C571, H706, and H745. Residues 926-1216 (FGGQMSTFVG…AMARRSLDSN (291 aa)) are malonyl-CoA:ACP transacylase (MAT). Residues 1298-1442 (GPLFGLLTFV…GKLDLLSSSE (145 aa)) are N-terminal hotdog fold. A PKS/mFAS DH domain is found at 1298 to 1618 (GPLFGLLTFV…YTRIPRHSMT (321 aa)). A product template (PT) domain region spans residues 1331 to 1616 (LVIPHIIART…IAYTRIPRHS (286 aa)). H1335 functions as the Proton acceptor; for dehydratase activity in the catalytic mechanism. A C-terminal hotdog fold region spans residues 1467-1618 (GDVSGLQGRS…YTRIPRHSMT (152 aa)). Residue D1524 is the Proton donor; for dehydratase activity of the active site. The Carrier domain maps to 1658 to 1733 (DTLKQTVGQI…AFVRYISKVV (76 aa)). Position 1692 is an O-(pantetheine 4'-phosphoryl)serine (S1692). The tract at residues 1737-1772 (DDLGTPSHSDNDSHVTGTTATPNSSSASSDTHHGNS) is disordered. The span at 1752–1765 (TGTTATPNSSSASS) shows a compositional bias: low complexity. A methyltransferase domain region spans residues 1979 to 2150 (VEKVKDDFQG…GYGHVDWTDG (172 aa)). The tract at residues 2229-2530 (IVVVTGATGS…IPLGEWVRKV (302 aa)) is NADPH-binding domain.

The cofactor is pantetheine 4'-phosphate.

Its pathway is mycotoxin biosynthesis. Its function is as follows. Non-reducing polyketide synthase; part of the satratoxin SC1 cluster involved in the biosynthesis of satratoxins, trichothecene mycotoxins that are associated with human food poisonings. Satratoxins are suggested to be made by products of multiple gene clusters (SC1, SC2 and SC3) that encode 21 proteins in all, including polyketide synthases, acetyltransferases, and other enzymes expected to modify the trichothecene skeleton. SC1 encodes 10 proteins, SAT1 to SAT10. The largest are SAT8, which encodes a putative polyketide synthase (PKS) with a conventional non-reducing architecture, and SAT10, a putative protein containing four ankyrin repeats and thus may be involved in protein scaffolding. The putative short-chain reductase SAT3 may assist the PKS in some capacity. SAT6 contains a secretory lipase domain and acts probably as a trichothecene esterase. SAT5 encodes a putative acetyltransferase, and so, with SAT6, may affect endogenous protection from toxicity. The probable transcription factor SAT9 may regulate the expression of the SC1 cluster. SC2 encodes proteins SAT11 to SAT16, the largest of which encodes the putative reducing PKS SAT13. SAT11 is a cytochrome P450 monooxygenase, while SAT14 and SAT16 are probable acetyltransferases. The SC2 cluster may be regulated by the transcription factor SAT15. SC3 is a small cluster that encodes 5 proteins, SAT17 to SAT21. SAT21 is a putative MFS-type transporter which may have a role in exporting secondary metabolites. The four other proteins putatively encoded in SC3 include the taurine hydroxylase-like protein SAT17, the O-methyltransferase SAT18, the acetyltransferase SAT19, and the Cys6-type zinc finger SAT20, the latter being probably involved in regulation of SC3 expression. In Stachybotrys chartarum (strain CBS 109288 / IBT 7711) (Toxic black mold), this protein is Non-reducing polyketide synthase SAT8.